We begin with the raw amino-acid sequence, 425 residues long: Nuclear hormone receptor family member nhr-13 (425 aa).

Residues 5-83 (PNSCEVCSSS…IGMKPLLVKS (79 aa)) constitute a DNA-binding region (nuclear receptor). NR C4-type zinc fingers lie at residues 11-30 (CSSSSNSSCNHFGARTCKAC) and 46-71 (CIDQPDACRVHCDSRVICRFCRLKKC). The disordered stretch occupies residues 108–148 (VKENSEEIQNDDDPQESDAEMENESTPGPSSEPSENVSAEN). A compositionally biased stretch (acidic residues) spans 113 to 130 (EEIQNDDDPQESDAEMEN). Positions 131–142 (ESTPGPSSEPSE) are enriched in low complexity. An NR LBD domain is found at 147–414 (ENQETVTKFL…KSMISLTSFW (268 aa)).

Belongs to the nuclear hormone receptor family. As to quaternary structure, may interact with nuclear hormone receptor nhr-49.

It is found in the nucleus. Functionally, orphan nuclear receptor. Involved in regulating fatty acid desaturase genes, acting in concert with nuclear hormone receptor nhr-49. This is Nuclear hormone receptor family member nhr-13 (nhr-13) from Caenorhabditis elegans.